A 234-amino-acid chain; its full sequence is 7-cyano-7-deazaguanine synthase (234 aa).

7–17 contributes to the ATP binding site; the sequence is LSGGLDSAVCM. Residues cysteine 197, cysteine 208, cysteine 211, and cysteine 214 each contribute to the Zn(2+) site.

It belongs to the QueC family. Zn(2+) serves as cofactor.

The enzyme catalyses 7-carboxy-7-deazaguanine + NH4(+) + ATP = 7-cyano-7-deazaguanine + ADP + phosphate + H2O + H(+). It participates in purine metabolism; 7-cyano-7-deazaguanine biosynthesis. In terms of biological role, catalyzes the ATP-dependent conversion of 7-carboxy-7-deazaguanine (CDG) to 7-cyano-7-deazaguanine (preQ(0)). This Methanococcus aeolicus (strain ATCC BAA-1280 / DSM 17508 / OCM 812 / Nankai-3) protein is 7-cyano-7-deazaguanine synthase.